A 917-amino-acid chain; its full sequence is Translation initiation factor IF-2 (917 aa).

A disordered region spans residues 1 to 312; the sequence is MEEQKSIKET…KGGREENENT (312 aa). Positions 20–30 are enriched in basic residues; the sequence is TKKKLVIKKKA. Over residues 41–59 the composition is skewed to polar residues; that stretch reads PGAQGQTTATEAKQSSPAS. Composition is skewed to basic and acidic residues over residues 60–76 and 95–118; these read SDKK…EAKR and RPDR…RKPE. Gly residues-rich tracts occupy residues 132-141, 167-256, and 281-293; these read SGGGQGGGNQ, QTGG…GYQG, and APGG…GPGG. Residues 297–312 are compositionally biased toward basic and acidic residues; it reads RVFDKEKGGREENENT. The region spanning 414 to 587 is the tr-type G domain; that stretch reads TRPPVVTIMG…ELLDHKANPK (174 aa). Positions 423–430 are G1; sequence GHVDHGKT. Residue 423–430 participates in GTP binding; it reads GHVDHGKT. The G2 stretch occupies residues 448-452; the sequence is GITQH. The interval 469 to 472 is G3; that stretch reads DTPG. GTP contacts are provided by residues 469–473 and 523–526; these read DTPGH and NKID. Residues 523 to 526 are G4; sequence NKID. The interval 559 to 561 is G5; that stretch reads SAK.

It belongs to the TRAFAC class translation factor GTPase superfamily. Classic translation factor GTPase family. IF-2 subfamily.

The protein localises to the cytoplasm. One of the essential components for the initiation of protein synthesis. Protects formylmethionyl-tRNA from spontaneous hydrolysis and promotes its binding to the 30S ribosomal subunits. Also involved in the hydrolysis of GTP during the formation of the 70S ribosomal complex. The chain is Translation initiation factor IF-2 from Leptospira biflexa serovar Patoc (strain Patoc 1 / ATCC 23582 / Paris).